The chain runs to 153 residues: ATP synthase subunit b' (153 aa).

Residues 20 to 40 traverse the membrane as a helical segment; the sequence is TLPLMAVQVVLLTFILNALFF.

This sequence belongs to the ATPase B chain family. As to quaternary structure, F-type ATPases have 2 components, F(1) - the catalytic core - and F(0) - the membrane proton channel. F(1) has five subunits: alpha(3), beta(3), gamma(1), delta(1), epsilon(1). F(0) has four main subunits: a(1), b(1), b'(1) and c(10-14). The alpha and beta chains form an alternating ring which encloses part of the gamma chain. F(1) is attached to F(0) by a central stalk formed by the gamma and epsilon chains, while a peripheral stalk is formed by the delta, b and b' chains.

The protein localises to the cellular thylakoid membrane. F(1)F(0) ATP synthase produces ATP from ADP in the presence of a proton or sodium gradient. F-type ATPases consist of two structural domains, F(1) containing the extramembraneous catalytic core and F(0) containing the membrane proton channel, linked together by a central stalk and a peripheral stalk. During catalysis, ATP synthesis in the catalytic domain of F(1) is coupled via a rotary mechanism of the central stalk subunits to proton translocation. Its function is as follows. Component of the F(0) channel, it forms part of the peripheral stalk, linking F(1) to F(0). The b'-subunit is a diverged and duplicated form of b found in plants and photosynthetic bacteria. This chain is ATP synthase subunit b', found in Prochlorococcus marinus (strain MIT 9211).